We begin with the raw amino-acid sequence, 115 residues long: MKFVLLFGVLLVTLFSYSSAEMLDDFDQADEDELLSLIEKEEARAKECTPRFYDCSHDRHSCCRSELFKDVCTCFYPEGGDNEVCTCQQPKHLKYMEKAADKAKKFGGKTKKWFG.

A signal peptide spans 1 to 20 (MKFVLLFGVLLVTLFSYSSA). Residues 21-44 (EMLDDFDQADEDELLSLIEKEEAR) constitute a propeptide that is removed on maturation. Intrachain disulfides connect C48–C63, C55–C72, C62–C87, and C74–C85.

It belongs to the neurotoxin 19 (CSTX) family. 01 subfamily. In terms of tissue distribution, expressed by the venom gland.

The protein resides in the secreted. The protein is U3-lycotoxin-Ls1d of Lycosa singoriensis (Wolf spider).